We begin with the raw amino-acid sequence, 229 residues long: Potassium/proton antiporter CemA (229 aa).

The next 4 helical transmembrane spans lie at 7–27, 106–126, 154–174, and 189–209; these read LASL…SLSF, IILH…YFFL, ILLV…ELMI, and IISG…KYWI.

This sequence belongs to the CemA family.

It is found in the plastid. The protein resides in the chloroplast inner membrane. It catalyses the reaction K(+)(in) + H(+)(out) = K(+)(out) + H(+)(in). Contributes to K(+)/H(+) antiport activity by supporting proton efflux to control proton extrusion and homeostasis in chloroplasts in a light-dependent manner to modulate photosynthesis. Prevents excessive induction of non-photochemical quenching (NPQ) under continuous-light conditions. Indirectly promotes efficient inorganic carbon uptake into chloroplasts. The chain is Potassium/proton antiporter CemA from Phalaenopsis aphrodite subsp. formosana (Moth orchid).